A 189-amino-acid chain; its full sequence is Protein GrpE (189 aa).

The span at 1 to 20 shows a compositional bias: polar residues; sequence MSDQQHSAPQNAAATASPSD. The tract at residues 1 to 29 is disordered; that stretch reads MSDQQHSAPQNAAATASPSDSPEAVEATM.

The protein belongs to the GrpE family. Homodimer.

Its subcellular location is the cytoplasm. In terms of biological role, participates actively in the response to hyperosmotic and heat shock by preventing the aggregation of stress-denatured proteins, in association with DnaK and GrpE. It is the nucleotide exchange factor for DnaK and may function as a thermosensor. Unfolded proteins bind initially to DnaJ; upon interaction with the DnaJ-bound protein, DnaK hydrolyzes its bound ATP, resulting in the formation of a stable complex. GrpE releases ADP from DnaK; ATP binding to DnaK triggers the release of the substrate protein, thus completing the reaction cycle. Several rounds of ATP-dependent interactions between DnaJ, DnaK and GrpE are required for fully efficient folding. This Paracidovorax citrulli (strain AAC00-1) (Acidovorax citrulli) protein is Protein GrpE.